We begin with the raw amino-acid sequence, 470 residues long: Aspartyl aminopeptidase (470 aa).

A Zn(2+)-binding site is contributed by H92. H166 contributes to the substrate binding site. D263 provides a ligand contact to Zn(2+). E299 contacts substrate. E300 and D343 together coordinate Zn(2+). Substrate contacts are provided by D343, H346, K371, and Y378. H437 contacts Zn(2+).

Belongs to the peptidase M18 family. In terms of assembly, tetrahedron-shaped homododecamer built from six homodimers. Requires Zn(2+) as cofactor. In terms of tissue distribution, expressed in various cell types and tissues including the pharynx, neurons, body wall muscle, intestine and vulva.

It localises to the cytoplasm. Its subcellular location is the cytosol. It carries out the reaction Release of an N-terminal aspartate or glutamate from a peptide, with a preference for aspartate.. In terms of biological role, aminopeptidase with specificity towards an acidic amino acid at the N-terminus. Plays a role in membrane trafficking and is specifically involved in the recycling and degradation of endocytic cargo. This Caenorhabditis elegans protein is Aspartyl aminopeptidase.